Consider the following 290-residue polypeptide: Putative phosphoenolpyruvate synthase regulatory protein (290 aa).

Residue 170–177 participates in ADP binding; it reads GVSRCGKT.

It belongs to the pyruvate, phosphate/water dikinase regulatory protein family. PSRP subfamily.

The enzyme catalyses [pyruvate, water dikinase] + ADP = [pyruvate, water dikinase]-phosphate + AMP + H(+). It carries out the reaction [pyruvate, water dikinase]-phosphate + phosphate + H(+) = [pyruvate, water dikinase] + diphosphate. Bifunctional serine/threonine kinase and phosphorylase involved in the regulation of the phosphoenolpyruvate synthase (PEPS) by catalyzing its phosphorylation/dephosphorylation. In Enterobacter agglomerans (Erwinia herbicola), this protein is Putative phosphoenolpyruvate synthase regulatory protein (ydiA).